Consider the following 126-residue polypeptide: Copper resistance protein C (126 aa).

Positions Met-1–Ala-24 are cleaved as a signal peptide. Position 25 (His-25) interacts with Cu(2+). Positions 64, 67, 70, 72, and 75 each coordinate Cu(+). His-115 is a Cu(2+) binding site.

It belongs to the CopC family. Monomer.

The protein resides in the periplasm. With respect to regulation, the redox state of copper bound to CopC may act as a switch between the possible trafficking pathways of the metal ion. In terms of biological role, copper-binding protein involved in copper resistance and homeostasis. Probably mediates copper resistance by sequestering the excess of copper in the periplasm. May act as a copper carrier in the oxidizing periplasmic space that exchanges either Cu(I) or Cu(II) with its putative partners CopA, CopB and CopD. The chain is Copper resistance protein C from Pseudomonas syringae pv. tomato.